We begin with the raw amino-acid sequence, 335 residues long: Rho guanine nucleotide exchange factor 39 (335 aa).

The DH domain occupies 22–197 (KRACTARELL…SETAQRVHTI (176 aa)). Residues 227–331 (WFLRQGWLLV…WYHSLTLAIS (105 aa)) enclose the PH domain.

The protein localises to the cell membrane. Functionally, promotes cell proliferation. The polypeptide is Rho guanine nucleotide exchange factor 39 (ARHGEF39) (Bos taurus (Bovine)).